We begin with the raw amino-acid sequence, 621 residues long: Archaeal Lon protease (621 aa).

At 1-117 (MNEEVREILG…YKEEAMKKAQ (117 aa)) the chain is on the cytoplasmic side. 54–61 (GSPGTGKS) contributes to the ATP binding site. Residues 118–136 (ARNFLIFTLVFLVIGYTVL) form a helical membrane-spanning segment. The Extracellular segment spans residues 137–141 (TNPGN). Residues 142–160 (LIWGIIAAVLILMMSRYFI) form a helical membrane-spanning segment. Topologically, residues 161–621 (PREDRNVPKL…KFKELELAAV (461 aa)) are cytoplasmic. One can recognise a Lon proteolytic domain in the interval 423–602 (GYEVGRVNGL…NEVLEHVLED (180 aa)). Catalysis depends on residues Ser509 and Lys552.

The protein belongs to the peptidase S16 family. Archaeal LonB subfamily. In terms of assembly, homohexamer. Organized in a ring with a central cavity.

Its subcellular location is the cell membrane. ATP-dependent serine protease that mediates the selective degradation of mutant and abnormal proteins as well as certain short-lived regulatory proteins. Degrades polypeptides processively. The polypeptide is Archaeal Lon protease (Archaeoglobus fulgidus (strain ATCC 49558 / DSM 4304 / JCM 9628 / NBRC 100126 / VC-16)).